The following is a 322-amino-acid chain: D-specific alpha-keto acid dehydrogenase (322 aa).

Residues 156-157, 229-231, and aspartate 255 each bind NAD(+); these read QI and TGR. Arginine 231 is a catalytic residue. Glutamate 260 is an active-site residue. The active-site Proton donor is the histidine 292. 292-295 is a binding site for NAD(+); the sequence is HTAY.

Belongs to the D-isomer specific 2-hydroxyacid dehydrogenase family.

It catalyses the reaction a (2R)-2-hydroxycarboxylate + NADP(+) = a 2-oxocarboxylate + NADPH + H(+). The catalysed reaction is a (2R)-2-hydroxycarboxylate + NAD(+) = a 2-oxocarboxylate + NADH + H(+). It carries out the reaction (R)-lactate + NADP(+) = pyruvate + NADPH + H(+). The enzyme catalyses (R)-lactate + NAD(+) = pyruvate + NADH + H(+). It catalyses the reaction (2R)-hydroxybutanoate + NADP(+) = 2-oxobutanoate + NADPH + H(+). In terms of biological role, required for high-level resistance to glycopeptide antibiotics. Catalyzes the reduction of 2-keto acids to 2-D-hydroxy acids, exhibiting highest catalytic efficiency with pyruvate and 2-oxobutanoate/alpha-ketobutyrate as substrates, producing D-lactate and (2R)-hydroxybutanoate, respectively. Together with D-alanine--D-lactate ligase VanA, gives rise to peptidoglycan precursors that terminate in the depsipeptide D-alanine-D-lactate rather than the dipeptide D-alanine-D-alanine thus preventing vancomycin binding. Shows a slight preference for NADPH over NADH as the electron donor. The sequence is that of D-specific alpha-keto acid dehydrogenase from Enterococcus faecium (Streptococcus faecium).